The sequence spans 415 residues: Carboxypeptidase G2 (415 aa).

The first 22 residues, 1–22 (MRPSIHRTAIAAVLATAFVAGT), serve as a signal peptide directing secretion. His112 lines the Zn(2+) pocket. Asp114 is an active-site residue. Asp141 is a Zn(2+) binding site. The active-site Proton acceptor is the Glu175. Residues Glu176, Glu200, and His385 each contribute to the Zn(2+) site.

The protein belongs to the peptidase M20A family. In terms of assembly, homodimer. Zn(2+) serves as cofactor.

It catalyses the reaction Release of C-terminal glutamate residues from a wide range of N-acylating moieties, including peptidyl, aminoacyl, benzoyl, benzyloxycarbonyl, folyl and pteroyl groups.. In terms of biological role, catalyzes the hydrolysis of reduced and non-reduced folates to pteroates and L-glutamate. This enzyme has a broad specificity. This chain is Carboxypeptidase G2 (cpg2), found in Pseudomonas sp. (strain RS-16).